Reading from the N-terminus, the 391-residue chain is Protein Wnt-2b (391 aa).

Intrachain disulfides connect Cys-107/Cys-118, Cys-158/Cys-166, Cys-168/Cys-188, Cys-237/Cys-251, and Cys-239/Cys-246. An N-linked (GlcNAc...) asparagine glycan is attached at Asn-117. The O-palmitoleoyl serine; by PORCN moiety is linked to residue Ser-243. Asn-283 carries N-linked (GlcNAc...) asparagine glycosylation. 6 disulfides stabilise this stretch: Cys-309/Cys-340, Cys-325/Cys-335, Cys-339/Cys-379, Cys-355/Cys-370, Cys-357/Cys-367, and Cys-362/Cys-363.

It belongs to the Wnt family. In terms of assembly, forms a soluble 1:1 complex with AFM; this prevents oligomerization and is required for prolonged biological activity. The complex with AFM may represent the physiological form in body fluids. Interacts with FZD4 and FZD5. Palmitoleoylation is required for efficient binding to frizzled receptors. Depalmitoleoylation leads to Wnt signaling pathway inhibition. In terms of tissue distribution, isoform 1 is expressed in adult heart, brain, placenta, lung, prostate, testis, ovary, small intestine and colon. In the adult brain, it is mainly found in the caudate nucleus, subthalamic nucleus and thalamus. Also detected in fetal brain, lung and kidney. Isoform 2 is expressed in fetal brain, fetal lung, fetal kidney, caudate nucleus, testis and cancer cell lines.

It is found in the secreted. It localises to the extracellular space. Its subcellular location is the extracellular matrix. Ligand for members of the frizzled family of seven transmembrane receptors. Functions in the canonical Wnt/beta-catenin signaling pathway. Plays a redundant role in embryonic lung development. This is Protein Wnt-2b (WNT2B) from Homo sapiens (Human).